The primary structure comprises 337 residues: Phosphate acyltransferase (337 aa).

Belongs to the PlsX family. As to quaternary structure, homodimer. Probably interacts with PlsY.

Its subcellular location is the cytoplasm. It carries out the reaction a fatty acyl-[ACP] + phosphate = an acyl phosphate + holo-[ACP]. The protein operates within lipid metabolism; phospholipid metabolism. Its function is as follows. Catalyzes the reversible formation of acyl-phosphate (acyl-PO(4)) from acyl-[acyl-carrier-protein] (acyl-ACP). This enzyme utilizes acyl-ACP as fatty acyl donor, but not acyl-CoA. The sequence is that of Phosphate acyltransferase from Polynucleobacter necessarius subsp. necessarius (strain STIR1).